Here is a 197-residue protein sequence, read N- to C-terminus: MEISAQMVKELRERTGAGMMDCKNALAEANGDFEKAIEILRKKGLAKAAKKAGRETKEGLIISYVHHNGKIGVLLELNCETDFVARTDDFKELGNKIAMHIAAMSPRWVTREEVPADVIEKEKEIYREQLKDSGKPAQVIEKIIEGKLESFYQDNCLLEQKFALDQNVTIKDMIQQAIAKIGENIQVSRFVRMQIGE.

Residues 81–84 (TDFV) are involved in Mg(2+) ion dislocation from EF-Tu.

The protein belongs to the EF-Ts family.

Its subcellular location is the cytoplasm. Associates with the EF-Tu.GDP complex and induces the exchange of GDP to GTP. It remains bound to the aminoacyl-tRNA.EF-Tu.GTP complex up to the GTP hydrolysis stage on the ribosome. This is Elongation factor Ts from Fervidobacterium nodosum (strain ATCC 35602 / DSM 5306 / Rt17-B1).